The primary structure comprises 98 residues: NADH-ubiquinone oxidoreductase chain 4L (98 aa).

The next 3 membrane-spanning stretches (helical) occupy residues Pro-2 to Phe-22, Ser-29 to Leu-49, and Ile-61 to Val-81.

The protein belongs to the complex I subunit 4L family. In terms of assembly, core subunit of respiratory chain NADH dehydrogenase (Complex I) which is composed of 45 different subunits.

It is found in the mitochondrion inner membrane. The enzyme catalyses a ubiquinone + NADH + 5 H(+)(in) = a ubiquinol + NAD(+) + 4 H(+)(out). Its function is as follows. Core subunit of the mitochondrial membrane respiratory chain NADH dehydrogenase (Complex I) which catalyzes electron transfer from NADH through the respiratory chain, using ubiquinone as an electron acceptor. Part of the enzyme membrane arm which is embedded in the lipid bilayer and involved in proton translocation. This chain is NADH-ubiquinone oxidoreductase chain 4L (MT-ND4L), found in Microcebus mamiratra (Claire's mouse lemur).